A 234-amino-acid chain; its full sequence is uncharacterized protein (234 aa).

10-34 (VVTGASSGIGASIAETLANQGVKVV) contributes to the NADP(+) binding site. Position 143 (S143) interacts with substrate. The active-site Proton acceptor is Y156.

It belongs to the short-chain dehydrogenases/reductases (SDR) family.

This is an uncharacterized protein from Staphylococcus saprophyticus subsp. saprophyticus (strain ATCC 15305 / DSM 20229 / NCIMB 8711 / NCTC 7292 / S-41).